A 195-amino-acid chain; its full sequence is NAD(P)H-quinone oxidoreductase subunit J, chloroplastic (195 aa).

The protein belongs to the complex I 30 kDa subunit family. As to quaternary structure, NDH is composed of at least 16 different subunits, 5 of which are encoded in the nucleus.

It is found in the plastid. It localises to the chloroplast thylakoid membrane. It catalyses the reaction a plastoquinone + NADH + (n+1) H(+)(in) = a plastoquinol + NAD(+) + n H(+)(out). It carries out the reaction a plastoquinone + NADPH + (n+1) H(+)(in) = a plastoquinol + NADP(+) + n H(+)(out). NDH shuttles electrons from NAD(P)H:plastoquinone, via FMN and iron-sulfur (Fe-S) centers, to quinones in the photosynthetic chain and possibly in a chloroplast respiratory chain. The immediate electron acceptor for the enzyme in this species is believed to be plastoquinone. Couples the redox reaction to proton translocation, and thus conserves the redox energy in a proton gradient. The chain is NAD(P)H-quinone oxidoreductase subunit J, chloroplastic from Chlorokybus atmophyticus (Soil alga).